Here is a 63-residue protein sequence, read N- to C-terminus: uncharacterized protein (63 aa).

This is an uncharacterized protein from Saccharomyces cerevisiae (strain ATCC 204508 / S288c) (Baker's yeast).